A 152-amino-acid polypeptide reads, in one-letter code: Phospholipase A2 (152 aa).

Positions M1 to A20 are cleaved as a signal peptide. Intrachain disulfides connect C39/C96, C53/C142, C55/C70, C69/C124, C75/C149, C76/C117, C85/C110, and C103/C115. Ca(2+)-binding residues include G56 and G58. The active site involves H73. D74 serves as a coordination point for Ca(2+). The active site involves D118.

It belongs to the phospholipase A2 family. In terms of tissue distribution, expressed by the venom gland. Heavily expressed in the venom gland transcriptome.

It is found in the secreted. It catalyses the reaction a 1,2-diacyl-sn-glycero-3-phosphocholine + H2O = a 1-acyl-sn-glycero-3-phosphocholine + a fatty acid + H(+). Functionally, PA2 catalyzes the calcium-dependent hydrolysis of the 2-acyl groups in 3-sn-phosphoglycerides. The polypeptide is Phospholipase A2 (Meiacanthus atrodorsalis (Forktail blenny)).